A 2364-amino-acid polypeptide reads, in one-letter code: Actin-binding protein F (2364 aa).

Residues 138-157 (THQTSPTTETTTTPSSSSSS) show a composition bias toward low complexity. Disordered regions lie at residues 138 to 168 (THQTSPTTETTTTPSSSSSSSHDDKSESTLD), 1087 to 1111 (QASKYNESEVKDEKSMRNRQVEKRR), 1412 to 1435 (NNNSNNNNNTTNSNSFGDAKRAPM), and 1929 to 2088 (KLIS…SEFN). A compositionally biased stretch (basic and acidic residues) spans 1092 to 1111 (NESEVKDEKSMRNRQVEKRR). 2 stretches are compositionally biased toward low complexity: residues 1412–1428 (NNNSNNNNNTTNSNSFG) and 1932–1960 (SSSTTTDSKSTHSSVISSSSSSNLSTTTD). A coiled-coil region spans residues 1960 to 2017 (DSSKDKKKLEKEEKQREKERKQKEKEDKKREKEELKKKEKEEKKKKEEEKKLKKKSGS). A compositionally biased stretch (basic and acidic residues) spans 1961–2010 (SSKDKKKLEKEEKQREKERKQKEKEDKKREKEELKKKEKEEKKKKEEEKK). The segment covering 2027–2047 (ATPTTTTTTEATTTTTTTTAT) has biased composition (low complexity). Positions 2052-2070 (IKPEKIASDDEHDDHHHDE) are enriched in basic and acidic residues. A compositionally biased stretch (acidic residues) spans 2071-2081 (HDEEDDDDEPL). Residues 2129 to 2173 (VQRWNSLFKDLRNKVDQVSNKDSVEIDYEKEIDRERRQNKMASNE) are a coiled coil.

As to quaternary structure, interacts with actin.

The protein localises to the nucleus. It localises to the cytoplasm. It is found in the cytoskeleton. The sequence is that of Actin-binding protein F (abpF) from Dictyostelium discoideum (Social amoeba).